Consider the following 547-residue polypeptide: Elongator complex protein 3 (547 aa).

Residues 82-372 enclose the Radical SAM core domain; that stretch reads RTASGIAVVA…YRVQRDIPMP (291 aa). The [4Fe-4S] cluster site is built by Cys99, Cys109, and Cys112. Phosphoserine is present on Ser161. Lys164 is a binding site for acetyl-CoA. Position 202 is a phosphotyrosine (Tyr202). Lys229 bears the N6-methyllysine mark. Tyr251 is subject to Phosphotyrosine. Positions 396-547 constitute an N-acetyltransferase domain; that stretch reads IQCRDVRTRE…QGPYMVKTLE (152 aa). Acetyl-CoA contacts are provided by residues 474–477, 497–499, and Tyr530; these read ELHV and FGM.

Belongs to the ELP3 family. In terms of assembly, component of the elongator complex which consists of ELP1, ELP2, ELP3, ELP4, ELP5 and ELP6. ELP1, ELP2 and ELP3 form the elongator core complex. Interacts with alpha-tubulin. It depends on [4Fe-4S] cluster as a cofactor. In terms of processing, tyrosine-phosphorylated; phosphorylation on Tyr-202 does not affect elongator complex integrity or ELP3 protein stability. Also serine/threonine-phosphorylated.

Its subcellular location is the cytoplasm. It is found in the nucleus. The catalysed reaction is uridine(34) in tRNA + acetyl-CoA + S-adenosyl-L-methionine + H2O = 5-(carboxymethyl)uridine(34) in tRNA + 5'-deoxyadenosine + L-methionine + CoA + 2 H(+). It functions in the pathway tRNA modification; 5-methoxycarbonylmethyl-2-thiouridine-tRNA biosynthesis. In terms of biological role, catalytic tRNA acetyltransferase subunit of the elongator complex which is required for multiple tRNA modifications, including mcm5U (5-methoxycarbonylmethyl uridine), mcm5s2U (5-methoxycarbonylmethyl-2-thiouridine), and ncm5U (5-carbamoylmethyl uridine). In the elongator complex, acts as a tRNA uridine(34) acetyltransferase by mediating formation of carboxymethyluridine in the wobble base at position 34 in tRNAs. May also act as a protein lysine acetyltransferase by mediating acetylation of target proteins; such activity is however unclear in vivo and recent evidences suggest that ELP3 primarily acts as a tRNA acetyltransferase. Involved in neurogenesis: regulates the migration and branching of projection neurons in the developing cerebral cortex, through a process depending on alpha-tubulin acetylation. Required for acetylation of GJA1 in the developing cerebral cortex. The sequence is that of Elongator complex protein 3 from Bos taurus (Bovine).